A 292-amino-acid chain; its full sequence is Protein LRATD1 (292 aa).

Serine 38 bears the Phosphoserine mark. The region spanning 133–228 (PATEQPAPAP…CRFGKREFKA (96 aa)) is the LRAT domain.

Belongs to the LRATD family.

The protein localises to the cytoplasm. Functionally, may play a role in cell morphology and motility. The chain is Protein LRATD1 from Mus musculus (Mouse).